The chain runs to 263 residues: Small ribosomal subunit protein eS4 (263 aa).

An S4 RNA-binding domain is found at 42–104 (LPLIIFLRNR…TGEHFRLVYD (63 aa)).

This sequence belongs to the eukaryotic ribosomal protein eS4 family. As to quaternary structure, component of the small ribosomal subunit.

Its subcellular location is the cytoplasm. Component of the small ribosomal subunit. The ribosome is a large ribonucleoprotein complex responsible for the synthesis of proteins in the cell. In Xenopus laevis (African clawed frog), this protein is Small ribosomal subunit protein eS4 (rps4).